We begin with the raw amino-acid sequence, 111 residues long: MVKIRLNRMGRRHQPFYRIVIVDSRNKRSGKYIESIGYYDPLNNSNQYKVDEDKALDWLLKGAQPTDTARRILRKMGVMKRYDEIKFQARKEKGVKESNEIVEPEGEEVKE.

Residues 92 to 111 are disordered; the sequence is EKGVKESNEIVEPEGEEVKE. Residues 100–111 are compositionally biased toward acidic residues; that stretch reads EIVEPEGEEVKE.

It belongs to the bacterial ribosomal protein bS16 family.

The protein is Small ribosomal subunit protein bS16 of Petrotoga mobilis (strain DSM 10674 / SJ95).